Here is a 371-residue protein sequence, read N- to C-terminus: Phosphate acyltransferase (371 aa).

Belongs to the PlsX family. As to quaternary structure, homodimer. Probably interacts with PlsY.

It localises to the cytoplasm. It catalyses the reaction a fatty acyl-[ACP] + phosphate = an acyl phosphate + holo-[ACP]. It participates in lipid metabolism; phospholipid metabolism. Its function is as follows. Catalyzes the reversible formation of acyl-phosphate (acyl-PO(4)) from acyl-[acyl-carrier-protein] (acyl-ACP). This enzyme utilizes acyl-ACP as fatty acyl donor, but not acyl-CoA. The protein is Phosphate acyltransferase of Ruegeria pomeroyi (strain ATCC 700808 / DSM 15171 / DSS-3) (Silicibacter pomeroyi).